The primary structure comprises 1399 residues: DNA-directed RNA polymerase subunit beta' (1399 aa).

Zn(2+)-binding residues include C70, C72, C85, and C88. Mg(2+)-binding residues include D460, D462, and D464. Residues C814, C888, C895, and C898 each contribute to the Zn(2+) site. The segment at 1367 to 1399 (SERKRQRDLGKPQRVSASEAEAALTEALNSSGN) is disordered. The span at 1382-1399 (SASEAEAALTEALNSSGN) shows a compositional bias: low complexity.

It belongs to the RNA polymerase beta' chain family. As to quaternary structure, the RNAP catalytic core consists of 2 alpha, 1 beta, 1 beta' and 1 omega subunit. When a sigma factor is associated with the core the holoenzyme is formed, which can initiate transcription. The cofactor is Mg(2+). Zn(2+) serves as cofactor.

The enzyme catalyses RNA(n) + a ribonucleoside 5'-triphosphate = RNA(n+1) + diphosphate. In terms of biological role, DNA-dependent RNA polymerase catalyzes the transcription of DNA into RNA using the four ribonucleoside triphosphates as substrates. This Pseudomonas paraeruginosa (strain DSM 24068 / PA7) (Pseudomonas aeruginosa (strain PA7)) protein is DNA-directed RNA polymerase subunit beta'.